The sequence spans 365 residues: D-alanine--D-alanine ligase (365 aa).

Positions 135–345 (KLLLKSFNIP…YGSLVDKLIA (211 aa)) constitute an ATP-grasp domain. 168–223 (KQSLDYPVIVKPAMLGSSIGISIAYNETQIEKCIEEAFAYDLTVVIEKFMRAREIE) is an ATP binding site. Mg(2+)-binding residues include Asp-298, Glu-312, and Asn-314.

This sequence belongs to the D-alanine--D-alanine ligase family. Mg(2+) serves as cofactor. It depends on Mn(2+) as a cofactor.

The protein localises to the cytoplasm. The enzyme catalyses 2 D-alanine + ATP = D-alanyl-D-alanine + ADP + phosphate + H(+). Its pathway is cell wall biogenesis; peptidoglycan biosynthesis. Cell wall formation. This chain is D-alanine--D-alanine ligase, found in Borrelia turicatae (strain 91E135).